We begin with the raw amino-acid sequence, 263 residues long: Glutamate/glutamine/aspartate/asparagine transport ATP-binding protein BztD (263 aa).

In terms of domain architecture, ABC transporter spans 23 to 257 (IQISQMNKWY…PQSERTKQFL (235 aa)). 55-62 (GPSGSGKS) serves as a coordination point for ATP.

The protein belongs to the ABC transporter superfamily. In terms of assembly, bztB and BztC form a heterodimer which can form a membrane complex with a homodimer of BztD.

Its subcellular location is the cell membrane. In terms of biological role, part of a binding-protein-dependent transport system for glutamate, glutamine, aspartate, asparagine. Probably responsible for energy coupling to the transport system. The polypeptide is Glutamate/glutamine/aspartate/asparagine transport ATP-binding protein BztD (bztD) (Rhodobacter capsulatus (strain ATCC BAA-309 / NBRC 16581 / SB1003)).